Here is a 161-residue protein sequence, read N- to C-terminus: Phosphopantetheine adenylyltransferase (161 aa).

Serine 9 provides a ligand contact to substrate. ATP contacts are provided by residues 9-10 (SF) and histidine 17. Residues lysine 41, leucine 73, and lysine 87 each contribute to the substrate site. ATP-binding positions include 88-90 (GLR), glutamate 98, and 123-129 (YSYLSSS).

This sequence belongs to the bacterial CoaD family. In terms of assembly, homohexamer. Requires Mg(2+) as cofactor.

The protein resides in the cytoplasm. The catalysed reaction is (R)-4'-phosphopantetheine + ATP + H(+) = 3'-dephospho-CoA + diphosphate. The protein operates within cofactor biosynthesis; coenzyme A biosynthesis; CoA from (R)-pantothenate: step 4/5. Reversibly transfers an adenylyl group from ATP to 4'-phosphopantetheine, yielding dephospho-CoA (dPCoA) and pyrophosphate. The protein is Phosphopantetheine adenylyltransferase of Clostridium novyi (strain NT).